Consider the following 194-residue polypeptide: MKVVDTEFVISAVSEKQYPKDDLPEFALAGRSNVGKSSLINTIVNRRKLARTSQQPGKTQTLNFYKVNNELYLVDVPGYGYAKVSKKQRAAFGEMIQDYLETRADLKGLILLVDARHDPTADDINMFNYALYLDIPILVVATKMDKLKKMEASQIKQKIGKSLDLKQENVSFLPFSSVSKLNVDKFWDWIEDKM.

An EngB-type G domain is found at 22-194 (DLPEFALAGR…KFWDWIEDKM (173 aa)). Residues 30–37 (GRSNVGKS), 57–61 (GKTQT), 75–78 (DVPG), 142–145 (TKMD), and 175–177 (FSS) each bind GTP. Ser37 and Thr59 together coordinate Mg(2+).

This sequence belongs to the TRAFAC class TrmE-Era-EngA-EngB-Septin-like GTPase superfamily. EngB GTPase family. Mg(2+) serves as cofactor.

Its function is as follows. Necessary for normal cell division and for the maintenance of normal septation. The polypeptide is Probable GTP-binding protein EngB (Lactobacillus gasseri (strain ATCC 33323 / DSM 20243 / BCRC 14619 / CIP 102991 / JCM 1131 / KCTC 3163 / NCIMB 11718 / NCTC 13722 / AM63)).